The primary structure comprises 231 residues: Large ribosomal subunit protein uL1 (231 aa).

This sequence belongs to the universal ribosomal protein uL1 family. As to quaternary structure, part of the 50S ribosomal subunit.

Its function is as follows. Binds directly to 23S rRNA. The L1 stalk is quite mobile in the ribosome, and is involved in E site tRNA release. Protein L1 is also a translational repressor protein, it controls the translation of the L11 operon by binding to its mRNA. The sequence is that of Large ribosomal subunit protein uL1 from Mycoplasmopsis agalactiae (strain NCTC 10123 / CIP 59.7 / PG2) (Mycoplasma agalactiae).